Consider the following 596-residue polypeptide: MKNIRNFSIIAHIDHGKSTLADRIIQECGSVSDRELGKQMMDTMDIEKERGITIKAQSVRLDYVKDGEHYILNLIDTPGHVDFSYEVSKSLASSDGALLIVDAAQGVEAQTIANVYLAMENNLTLIPVINKIDLPAADPTKVAEEIETSIGIDATDAVLVSAKTGVGIRALIDAIVDRIPAPVGDSNAPTKAIIYDSWFDPYLGALGLVRVFDGEIKVNQLVKIMSNGEEHQVLDLMYPHPLKRKKTPVIKTGEIGIVVLGLKEVHVVNVGDTITDAKNPTCEPVVEYEPAKPFVFAGIYPIDTDEFENLRDALDKLRLNDSSLSFQPETSLALGFGFRVGFLGMLHMEVVKERLEREFNLDLIASAPSVIYKVYLNNGEEIHVHNPSELPEVNRIDRIEEPYIKATVITPSEYLGNIITLLINKRGTQTKMTYLNQDRVMLEYEVPMNEIVMDFYDKLKSISKGYASFDYEPIEFRVGDLVKLDIKVAGEAVDALSIVVPRNQALPRGRVLVKNMKEIIPRQLFEVAVQASLGSQVIARETVKSMGKNVTAKCYGGDITRKRKLLEKQKEGKKRMKSIGKVQLPQEAFMSVLKMD.

Residues 2-183 (KNIRNFSIIA…AIVDRIPAPV (182 aa)) enclose the tr-type G domain. Residues 14-19 (DHGKST) and 130-133 (NKID) contribute to the GTP site.

This sequence belongs to the TRAFAC class translation factor GTPase superfamily. Classic translation factor GTPase family. LepA subfamily.

The protein resides in the cell inner membrane. The enzyme catalyses GTP + H2O = GDP + phosphate + H(+). Its function is as follows. Required for accurate and efficient protein synthesis under certain stress conditions. May act as a fidelity factor of the translation reaction, by catalyzing a one-codon backward translocation of tRNAs on improperly translocated ribosomes. Back-translocation proceeds from a post-translocation (POST) complex to a pre-translocation (PRE) complex, thus giving elongation factor G a second chance to translocate the tRNAs correctly. Binds to ribosomes in a GTP-dependent manner. The sequence is that of Elongation factor 4 from Sulfurimonas denitrificans (strain ATCC 33889 / DSM 1251) (Thiomicrospira denitrificans (strain ATCC 33889 / DSM 1251)).